Reading from the N-terminus, the 218-residue chain is Nonsense-mediated decay protein 4 (218 aa).

Its subcellular location is the cytoplasm. Functionally, involved in nonsense-mediated decay of mRNAs containing premature stop codons. The chain is Nonsense-mediated decay protein 4 (NMD4) from Saccharomyces cerevisiae (strain ATCC 204508 / S288c) (Baker's yeast).